A 280-amino-acid chain; its full sequence is uncharacterized protein (280 aa).

Disordered regions lie at residues 1–83 and 248–280; these read MELK…EEEQ and IRHR…EARL. A compositionally biased stretch (polar residues) spans 12–25; it reads SAKTDNHTVYQNSP. Composition is skewed to basic and acidic residues over residues 41 to 71 and 249 to 280; these read KQTR…RVDD and RHRE…EARL.

The protein belongs to the chlamydial CPn_0705/CT_671/TC_0042 family.

This is an uncharacterized protein from Chlamydia pneumoniae (Chlamydophila pneumoniae).